The sequence spans 666 residues: DNA ligase (666 aa).

NAD(+) is bound by residues Asp34–Asp38, Ser83–Leu84, and Glu114. The active-site N6-AMP-lysine intermediate is the Lys116. Residues Arg137, Glu174, Lys290, and Lys314 each contribute to the NAD(+) site. Cys408, Cys411, Cys424, and Cys429 together coordinate Zn(2+). One can recognise a BRCT domain in the interval Ser584–Gly666.

Belongs to the NAD-dependent DNA ligase family. LigA subfamily. The cofactor is Mg(2+). Requires Mn(2+) as cofactor.

It carries out the reaction NAD(+) + (deoxyribonucleotide)n-3'-hydroxyl + 5'-phospho-(deoxyribonucleotide)m = (deoxyribonucleotide)n+m + AMP + beta-nicotinamide D-nucleotide.. In terms of biological role, DNA ligase that catalyzes the formation of phosphodiester linkages between 5'-phosphoryl and 3'-hydroxyl groups in double-stranded DNA using NAD as a coenzyme and as the energy source for the reaction. It is essential for DNA replication and repair of damaged DNA. The polypeptide is DNA ligase (Coprothermobacter proteolyticus (strain ATCC 35245 / DSM 5265 / OCM 4 / BT)).